A 139-amino-acid chain; its full sequence is Large ribosomal subunit protein uL16 (139 aa).

Positions 1-16 (MLIPRRVKHRKQHHPG) are enriched in basic residues. The tract at residues 1–25 (MLIPRRVKHRKQHHPGRSGQATGGT) is disordered.

Belongs to the universal ribosomal protein uL16 family. Part of the 50S ribosomal subunit.

Functionally, binds 23S rRNA and is also seen to make contacts with the A and possibly P site tRNAs. This is Large ribosomal subunit protein uL16 from Leifsonia xyli subsp. xyli (strain CTCB07).